The chain runs to 199 residues: Recombination protein RecR (199 aa).

Residues 57–72 (CQACRTFTEETLCPIC) form a C4-type zinc finger. Residues 81–176 (EVICVVETPA…SVSRIAHGVP (96 aa)) enclose the Toprim domain.

This sequence belongs to the RecR family.

Its function is as follows. May play a role in DNA repair. It seems to be involved in an RecBC-independent recombinational process of DNA repair. It may act with RecF and RecO. The chain is Recombination protein RecR from Shewanella woodyi (strain ATCC 51908 / MS32).